Reading from the N-terminus, the 1176-residue chain is Chromosome partition protein Smc (1176 aa).

32-39 is an ATP binding site; sequence PNGCGKSN. The stretch at 169-506 forms a coiled coil; that stretch reads GVSRYKERRR…VKLQEDVQKQ (338 aa). In terms of domain architecture, SMC hinge spans 521–623; that stretch reads LGRLWQKLHI…TAPDLGQALA (103 aa). Coiled-coil stretches lie at residues 653–947 and 987–1024; these read DSEQ…LAAM and ERKE…LQAT.

This sequence belongs to the SMC family. Homodimer.

The protein localises to the cytoplasm. Its function is as follows. Required for chromosome condensation and partitioning. This Bordetella petrii (strain ATCC BAA-461 / DSM 12804 / CCUG 43448) protein is Chromosome partition protein Smc.